The primary structure comprises 58 residues: MAVPKKRTSKSKKNMRKANWKNQAKLAAKKALSLGKSVETQRSHSFVHPRYEEEEEED.

Residues 1 to 19 (MAVPKKRTSKSKKNMRKAN) are compositionally biased toward basic residues. The segment at 1–58 (MAVPKKRTSKSKKNMRKANWKNQAKLAAKKALSLGKSVETQRSHSFVHPRYEEEEEED) is disordered. Low complexity predominate over residues 20–32 (WKNQAKLAAKKAL).

Belongs to the bacterial ribosomal protein bL32 family.

This is Large ribosomal subunit protein bL32 from Trichodesmium erythraeum (strain IMS101).